The primary structure comprises 264 residues: Large ribosomal subunit protein uL2 (264 aa).

The protein belongs to the universal ribosomal protein uL2 family.

Its subcellular location is the cytoplasm. The protein is Large ribosomal subunit protein uL2 (RPL8) of Tetrahymena thermophila (strain SB210).